The sequence spans 322 residues: Endochitinase CH25 (322 aa).

The signal sequence occupies residues Met1 to Ala20. Positions Glu21–Gly62 constitute a Chitin-binding type-1 domain. 7 disulfides stabilise this stretch: Cys23-Cys38, Cys32-Cys44, Cys37-Cys51, Cys56-Cys60, Cys92-Cys154, Cys166-Cys174, and Cys273-Cys305. Glu136 functions as the Proton donor in the catalytic mechanism.

This sequence belongs to the glycosyl hydrolase 19 family. Chitinase class I subfamily. High expression in roots, moderate in floral tissues and low in stems and leaves.

The enzyme catalyses Random endo-hydrolysis of N-acetyl-beta-D-glucosaminide (1-&gt;4)-beta-linkages in chitin and chitodextrins.. In Brassica napus (Rape), this protein is Endochitinase CH25.